The sequence spans 108 residues: Ig kappa chain V-V region HP 93G7 (108 aa).

Residues 1 to 23 (DIQMTQTTSSLSASLGDRVTISC) form a framework-1 region. C23 and C88 are joined by a disulfide. A complementarity-determining-1 region spans residues 24-34 (RASQDISNYLN). The tract at residues 35–49 (WYQQKPDGTVKLLIY) is framework-2. The interval 50–56 (YTSRLHS) is complementarity-determining-2. The interval 57–88 (GVPSRFSGSGSGTDYSLTISNLEQEDIATYFC) is framework-3. The segment at 89–97 (QQGNMLPRT) is complementarity-determining-3. A framework-4 region spans residues 98 to 108 (FGGGTKLEIKR).

This is Ig kappa chain V-V region HP 93G7 from Mus musculus (Mouse).